The sequence spans 117 residues: MKKFGTVLLSDIVKECLSGDEFAREMMEDLFNFLIKLRLWRWKYLLSQNQKNEIQMSDLLALIKEEKEGINRLFSFLYQTDIPVENRIEILMLLKEFVKEEIKWISMDVSEINFVKK.

This is an uncharacterized protein from Methanocaldococcus jannaschii (strain ATCC 43067 / DSM 2661 / JAL-1 / JCM 10045 / NBRC 100440) (Methanococcus jannaschii).